The primary structure comprises 341 residues: Short chain dehydrogenase virL (341 aa).

NADP(+) contacts are provided by leucine 49, lysine 74, aspartate 97, asparagine 123, tyrosine 210, and lysine 214. The active-site Proton donor is the tyrosine 210. The active-site Lowers pKa of active site Tyr is the lysine 214.

This sequence belongs to the short-chain dehydrogenases/reductases (SDR) family.

Its pathway is secondary metabolite biosynthesis. In terms of biological role, short chain dehydrogenase; part of the gene cluster that mediates the biosynthesis of virensols and trichoxide, fungal natural products that contain or are derived from a salicylaldehyde core. The pathway begins with the synthesis of the reduced chain in virensol C by the highly reducing polyketide synthase virA via condensation of one acetate and 8 malonate units. VirA has interesting programming rules since the first 2 ketides are fully reduced, the 3 following ketides undergo beta-dehydration, and the last 3 ketides are only reduced to beta-hydroxys to yield the trihydroxy portion. The production of aldehyde virensol C by virA alone is surprising, since virA does not contain a reductase (R) domain that is typically associated with reductive product release in HRPKS. The cupin-domain enzyme virC is involved in enhancing virA product turnover. The short-chain dehydrogenase virB then oxidizes the C-7 alcohol of virensol C to a ketone, yielding virensol D. Virensol D is further transformed to salicylaldehyde 5-deoxyaurocitrin by the short-chain dehydrogenase virD. VirD catalyzes the dehydrogenation of C-3 to form the beta-ketone aldehyde, which is followed by the generation of the nucleophilic C-2 that is required for the intramolecular aldol condensation between C-2 and C-7, itself followed by dehydration and aromatization which leads to salicylaldehyde 5-deoxyaurocitrin. While the dehydrogenation of virensol D is definitely catalyzed by virD, the aldol condensation and dehydration may be uncatalyzed or assisted by virD. The short chain dehydrogenase virG then converts salicylaldehyde 5-deoxyaurocitrin into virensol B which is further hydroxylated by the cytochrome P450 monooxygenase virE to yield the hydroquinone virensol A. VirI then may oxidize virensol A to form the quinone, while virH performs the epoxidation. Finally, the two remaining short-chain dehydrogenases, virK and virL, are probably responsible for reducing the ketones to the corresponding alcohols to furnish the epoxycyclohexanol structure in trichoxide. This chain is Short chain dehydrogenase virL, found in Hypocrea virens (strain Gv29-8 / FGSC 10586) (Gliocladium virens).